Here is a 447-residue protein sequence, read N- to C-terminus: UPF0210 protein LBUL_0934 (447 aa).

This sequence belongs to the UPF0210 family. Homodimer.

The protein is UPF0210 protein LBUL_0934 of Lactobacillus delbrueckii subsp. bulgaricus (strain ATCC BAA-365 / Lb-18).